Consider the following 323-residue polypeptide: Aldo-keto reductase family 1 member C1 (323 aa).

Residues Gly-20 to Tyr-24 and Asp-50 contribute to the NADP(+) site. Residue Tyr-24 coordinates substrate. Tyr-55 functions as the Proton donor in the catalytic mechanism. His-117 lines the substrate pocket. NADP(+)-binding positions include Ser-166 to Asn-167, Gln-190, and Tyr-216 to His-222. Positions 222 and 227 each coordinate substrate. Lys-270–Asn-280 lines the NADP(+) pocket.

The protein belongs to the aldo/keto reductase family. Monomer.

Its subcellular location is the cytoplasm. It localises to the cytosol. It catalyses the reaction a 3alpha-hydroxysteroid + NADP(+) = a 3-oxosteroid + NADPH + H(+). The catalysed reaction is a 3alpha-hydroxysteroid + NAD(+) = a 3-oxosteroid + NADH + H(+). It carries out the reaction (17R,20S)-17,20-dihydroxypregn-4-en-3-one + NADP(+) = 17alpha-hydroxyprogesterone + NADPH + H(+). The enzyme catalyses (17R,20S)-17,20-dihydroxypregn-4-en-3-one + NAD(+) = 17alpha-hydroxyprogesterone + NADH + H(+). It catalyses the reaction (20S)-hydroxypregn-4-en-3-one + NADP(+) = progesterone + NADPH + H(+). The catalysed reaction is (20S)-hydroxypregn-4-en-3-one + NAD(+) = progesterone + NADH + H(+). It carries out the reaction (1R,2R)-1,2-dihydrobenzene-1,2-diol + NADP(+) = catechol + NADPH + H(+). The enzyme catalyses (S)-indan-1-ol + NAD(+) = indan-1-one + NADH + H(+). It catalyses the reaction (S)-indan-1-ol + NADP(+) = indan-1-one + NADPH + H(+). The catalysed reaction is 5alpha-androstane-3alpha,17beta-diol + NADP(+) = 17beta-hydroxy-5alpha-androstan-3-one + NADPH + H(+). It carries out the reaction 5alpha-androstane-3beta,17beta-diol + NADP(+) = 17beta-hydroxy-5alpha-androstan-3-one + NADPH + H(+). The enzyme catalyses 5alpha-androstane-3alpha,17beta-diol + NAD(+) = 17beta-hydroxy-5alpha-androstan-3-one + NADH + H(+). It catalyses the reaction 17beta-hydroxy-5alpha-androstan-3-one + NADP(+) = 5alpha-androstan-3,17-dione + NADPH + H(+). The catalysed reaction is androsterone + NADP(+) = 5alpha-androstan-3,17-dione + NADPH + H(+). It carries out the reaction androsterone + NADPH + H(+) = 5alpha-androstane-3alpha,17beta-diol + NADP(+). The enzyme catalyses 5alpha-androstane-3alpha,17beta-diol + NAD(+) = androsterone + NADH + H(+). It catalyses the reaction 17beta-estradiol + NADP(+) = estrone + NADPH + H(+). The catalysed reaction is 17beta-estradiol + NAD(+) = estrone + NADH + H(+). It carries out the reaction testosterone + NADP(+) = androst-4-ene-3,17-dione + NADPH + H(+). The enzyme catalyses 20alpha-hydroxy-5beta-pregnan-3-one + NADP(+) = 5beta-pregnan-3,20-dione + NADPH + H(+). It catalyses the reaction 3beta-hydroxy-5beta-pregnane-20-one + NADP(+) = 5beta-pregnan-3,20-dione + NADPH + H(+). The catalysed reaction is 3beta-hydroxy-5beta-pregnane-20-one + NADPH + H(+) = 3beta,20alpha-dihydroxy-5beta-pregnane + NADP(+). It carries out the reaction (3beta,5alpha,17beta)-3-hydroxyandrostan-17-yl sulfate + NADP(+) = 5alpha-dihydrotestosterone sulfate + NADPH + H(+). It functions in the pathway steroid metabolism. Its function is as follows. Cytosolic aldo-keto reductase that catalyzes the NADH and NADPH-dependent reduction of ketosteroids to hydroxysteroids. Most probably acts as a reductase in vivo since the oxidase activity measured in vitro is inhibited by physiological concentrations of NADPH. Displays a broad positional specificity acting on positions 3, 17 and 20 of steroids and regulates the metabolism of hormones like estrogens and androgens. May also reduce conjugated steroids such as 5alpha-dihydrotestosterone sulfate. Displays affinity for bile acids. This is Aldo-keto reductase family 1 member C1 (AKR1C1) from Pongo abelii (Sumatran orangutan).